We begin with the raw amino-acid sequence, 122 residues long: Small ribosomal subunit protein uS13 (122 aa).

Residues 93 to 122 (RLSLPVRGQRTKTNSRTRKGKRKTVAGKKK) are disordered. Residues 101 to 122 (QRTKTNSRTRKGKRKTVAGKKK) show a composition bias toward basic residues.

Belongs to the universal ribosomal protein uS13 family. As to quaternary structure, part of the 30S ribosomal subunit. Forms a loose heterodimer with protein S19. Forms two bridges to the 50S subunit in the 70S ribosome.

Functionally, located at the top of the head of the 30S subunit, it contacts several helices of the 16S rRNA. In the 70S ribosome it contacts the 23S rRNA (bridge B1a) and protein L5 of the 50S subunit (bridge B1b), connecting the 2 subunits; these bridges are implicated in subunit movement. Contacts the tRNAs in the A and P-sites. This is Small ribosomal subunit protein uS13 from Chlamydia abortus (strain DSM 27085 / S26/3) (Chlamydophila abortus).